Reading from the N-terminus, the 439-residue chain is Exodeoxyribonuclease 7 large subunit (439 aa).

It belongs to the XseA family. As to quaternary structure, heterooligomer composed of large and small subunits.

Its subcellular location is the cytoplasm. The catalysed reaction is Exonucleolytic cleavage in either 5'- to 3'- or 3'- to 5'-direction to yield nucleoside 5'-phosphates.. Its function is as follows. Bidirectionally degrades single-stranded DNA into large acid-insoluble oligonucleotides, which are then degraded further into small acid-soluble oligonucleotides. The sequence is that of Exodeoxyribonuclease 7 large subunit from Haemophilus influenzae (strain ATCC 51907 / DSM 11121 / KW20 / Rd).